A 722-amino-acid polypeptide reads, in one-letter code: Probable acyl-activating enzyme 16, chloroplastic (722 aa).

Residues 1-47 (MASTSLGASILVSHCSSAPEFQVSGMRLVFGYKAFGCRTSRRGFRVR) constitute a chloroplast transit peptide.

It belongs to the ATP-dependent AMP-binding enzyme family.

It localises to the plastid. The protein resides in the chloroplast. In terms of biological role, may be involved in the activation of fatty acids to acyl-carrier-protein. This chain is Probable acyl-activating enzyme 16, chloroplastic (AAE16), found in Arabidopsis thaliana (Mouse-ear cress).